The primary structure comprises 1316 residues: DNA-directed RNA polymerase subunit beta' (1316 aa).

Positions 60, 62, 75, and 78 each coordinate Zn(2+). Aspartate 535, aspartate 537, and aspartate 539 together coordinate Mg(2+). The Zn(2+) site is built by cysteine 891, cysteine 968, cysteine 975, and cysteine 978.

The protein belongs to the RNA polymerase beta' chain family. As to quaternary structure, the RNAP catalytic core consists of 2 alpha, 1 beta, 1 beta' and 1 omega subunit. When a sigma factor is associated with the core the holoenzyme is formed, which can initiate transcription. Requires Mg(2+) as cofactor. It depends on Zn(2+) as a cofactor.

The enzyme catalyses RNA(n) + a ribonucleoside 5'-triphosphate = RNA(n+1) + diphosphate. In terms of biological role, DNA-dependent RNA polymerase catalyzes the transcription of DNA into RNA using the four ribonucleoside triphosphates as substrates. This is DNA-directed RNA polymerase subunit beta' from Mycobacterium marinum (strain ATCC BAA-535 / M).